The following is a 101-amino-acid chain: Chaperone modulatory protein CbpM (101 aa).

This sequence belongs to the CbpM family.

Its function is as follows. Interacts with CbpA and inhibits both the DnaJ-like co-chaperone activity and the DNA binding activity of CbpA. Together with CbpA, modulates the activity of the DnaK chaperone system. Does not inhibit the co-chaperone activity of DnaJ. The sequence is that of Chaperone modulatory protein CbpM from Salmonella paratyphi A (strain ATCC 9150 / SARB42).